Consider the following 123-residue polypeptide: MSSLLLSDVLSYGIFGFSALCVQAHLTSKFTPSFSRNLEEKLPLHNKAVFWWLGISDSALRYVFVSINIAVCVLLWSPELRSFGLKFTLGLLGVGFYSDMKLGESPIPHLLLVSTVGAAILVR.

A signal peptide spans 1-24 (MSSLLLSDVLSYGIFGFSALCVQA). Transmembrane regions (helical) follow at residues 58–78 (SALR…LWSP) and 102–122 (LGES…AILV).

The protein belongs to the cyclic ether formation enzyme xenC family.

It is found in the membrane. Its pathway is mycotoxin biosynthesis. Functionally, cyclic ether formation enzyme; part of the gene cluster that mediates the biosynthesis of xenoacremones such as xenoacremone A, a compound that shows inhibitory activity toward the PI3K/AKT signaling pathway and which has the ability to induce apoptosis of A549 lung cancer cells. Within the pathway, cooperation of the hybrid PKS-NRPS xenE and the trans-acting enoyl reductase xenG is responsible for the formation of the reduced tyrosine-nonaketide derivative. The alpha/beta hydrolase xenA then accelerates intramolecular nucleophilic attack to give a pyrrolidone derivative. Subsequently, three enzymes, xenF, xenD, and xenC, coordinately participate in the conversion to xenoacremone B. XenF catalyzes sigmatropic rearrangement to form an A-ring, which leads to an unusual intermediate with a hexane ring, which is required for the formation of the tricarbocyclic product. Epoxidation catalyzed by xenD and the formation of the paracyclophane ether catalyzed by xenC initiate a spontaneous intramolecular Diels-Alder (IMDA) reaction to yield xenoacremone B. Spontaneous hydration of xenoacremone B leads to the formation of xenoacremone A, which undergoes subsequent methylation to afford xenoacremone C. The protein is Cyclic ether formation enzyme xenC of Xenoacremonium sinensis (Endophyte fungus).